A 252-amino-acid chain; its full sequence is Probable transcriptional regulatory protein HNE_0161 (252 aa).

Belongs to the TACO1 family.

Its subcellular location is the cytoplasm. In Hyphomonas neptunium (strain ATCC 15444), this protein is Probable transcriptional regulatory protein HNE_0161.